Reading from the N-terminus, the 638-residue chain is LIM domain kinase 2 (638 aa).

LIM zinc-binding domains are found at residues 12–63 (CRGC…CHKD) and 72–124 (CHGC…CGKC). Residues 152–239 (LISMPATTEC…TLQLLIEHDP (88 aa)) enclose the PDZ domain. Thr-210 bears the Phosphothreonine mark. A compositionally biased stretch (polar residues) spans 257–266 (MQSSGHTLML). The tract at residues 257–304 (MQSSGHTLMLSTLDAKENQEGTLRRRSLRRSNSISKSPGPSSPKEPLL) is disordered. The segment covering 270-279 (DAKENQEGTL) has biased composition (basic and acidic residues). The segment covering 286–304 (RSNSISKSPGPSSPKEPLL) has biased composition (low complexity). Residues Ser-293 and Ser-298 each carry the phosphoserine modification. The Protein kinase domain occupies 331 to 608 (LIHGEVLGKG…DSFEALSLFL (278 aa)). Residues 337–345 (LGKGFFGQA) and Lys-360 contribute to the ATP site. Residue Asp-451 is part of the active site. The residue at position 505 (Thr-505) is a Phosphothreonine; by ROCK1 and CDC42BP.

The protein belongs to the protein kinase superfamily. TKL Ser/Thr protein kinase family. Binds ROCK1 and MARF1. Interacts with NISCH. Phosphorylated on serine and/or threonine residues by ROCK1. In terms of tissue distribution, found in various tissues at moderate levels, except for testis, which shows very low expression.

The protein localises to the cytoplasm. The protein resides in the nucleus. It localises to the perinuclear region. It is found in the cytoskeleton. Its subcellular location is the spindle. The protein localises to the microtubule organizing center. The protein resides in the centrosome. The enzyme catalyses L-seryl-[protein] + ATP = O-phospho-L-seryl-[protein] + ADP + H(+). It catalyses the reaction L-threonyl-[protein] + ATP = O-phospho-L-threonyl-[protein] + ADP + H(+). In terms of biological role, serine/threonine-protein kinase that plays an essential role in the regulation of actin filament dynamics. Acts downstream of several Rho family GTPase signal transduction pathways. Involved in astral microtubule organization and mitotic spindle orientation during early stages of mitosis by mediating phosphorylation of TPPP. Displays serine/threonine-specific phosphorylation of myelin basic protein and histone (MBP) in vitro. Suppresses ciliogenesis via multiple pathways; phosphorylation of CFL1, directional trafficking of ciliary vesicles to the ciliary base, and by facilitating YAP1 nuclear localization where it acts as a transcriptional corepressor of the TEAD4 target genes AURKA and PLK1. This is LIM domain kinase 2 (Limk2) from Rattus norvegicus (Rat).